A 79-amino-acid chain; its full sequence is Sulfur carrier protein TusA (79 aa).

Cys-17 (cysteine persulfide intermediate) is an active-site residue.

It belongs to the sulfur carrier protein TusA family.

It localises to the cytoplasm. Functionally, sulfur carrier protein which probably makes part of a sulfur-relay system. This is Sulfur carrier protein TusA from Histophilus somni (strain 129Pt) (Haemophilus somnus).